We begin with the raw amino-acid sequence, 184 residues long: Acireductone dioxygenase 4 (184 aa).

4 residues coordinate Fe(2+): His-86, His-88, Glu-92, and His-131. His-86, His-88, Glu-92, and His-131 together coordinate Ni(2+).

It belongs to the acireductone dioxygenase (ARD) family. Requires Fe(2+) as cofactor. Ni(2+) serves as cofactor.

Its subcellular location is the cytoplasm. It is found in the nucleus. The enzyme catalyses 1,2-dihydroxy-5-(methylsulfanyl)pent-1-en-3-one + O2 = 4-methylsulfanyl-2-oxobutanoate + formate + 2 H(+). The catalysed reaction is 1,2-dihydroxy-5-(methylsulfanyl)pent-1-en-3-one + O2 = 3-(methylsulfanyl)propanoate + CO + formate + 2 H(+). It functions in the pathway amino-acid biosynthesis; L-methionine biosynthesis via salvage pathway; L-methionine from S-methyl-5-thio-alpha-D-ribose 1-phosphate: step 5/6. In terms of biological role, catalyzes 2 different reactions between oxygen and the acireductone 1,2-dihydroxy-3-keto-5-methylthiopentene (DHK-MTPene) depending upon the metal bound in the active site. Fe-containing acireductone dioxygenase (Fe-ARD) produces formate and 2-keto-4-methylthiobutyrate (KMTB), the alpha-ketoacid precursor of methionine in the methionine recycle pathway. Ni-containing acireductone dioxygenase (Ni-ARD) produces methylthiopropionate, carbon monoxide and formate, and does not lie on the methionine recycle pathway. The sequence is that of Acireductone dioxygenase 4 (ARD4) from Oryza sativa subsp. japonica (Rice).